The primary structure comprises 1165 residues: Linoleate diol synthase (1165 aa).

The fatty acid alpha-dioxygenase stretch occupies residues 104 to 448 (TDGLINDLWD…DGAFDDTELV (345 aa)). His203 contributes to the heme b binding site. 5 residues coordinate Ca(2+): Asp204, Ser219, Tyr221, Asp223, and Ser225. The active site involves Tyr376. Residue His379 coordinates heme b. Residues 666–1161 (EVLSNQKDYK…ATTMKINWEG (496 aa)) are epoxy alcohol synthase. Cys1080 contacts heme. The interval 1114–1134 (RSYPASQWPGQAGRPPRDPAW) is disordered.

Belongs to the peroxidase family. Homotetramer. Heme b serves as cofactor. The cofactor is Ca(2+). Heme is required as a cofactor. The N-terminus is blocked.

It catalyses the reaction (9Z,12Z)-octadecadienoate + O2 = (8R,9Z,12Z)-8-hydroperoxyoctadeca-9,12-dienoate. It carries out the reaction (8R,9Z,12Z)-8-hydroperoxyoctadeca-9,12-dienoate = (7S,8S,9Z,12Z)-7,8-dihydroxyoctadeca-9,12-dienoate. Its function is as follows. 7,8-linoleate diol synthase is a bifunctional enzyme that converts linoleic acid (18:2n-6) into 8-hydroperoxy-8(E),12(Z)-octadecadienoic acid (8-HPODE) and then catalyzes the isomerization of the resulting hydroperoxide to 7,8-dihydroxy-9(Z),12(Z)-octadecadienoic acid (7,8-DiHODE). This chain is Linoleate diol synthase, found in Gaeumannomyces graminis (Turf grass take-all root rot fungus).